Reading from the N-terminus, the 511-residue chain is Bifunctional purine biosynthesis protein PurH (511 aa).

Residues 1 to 145 (MKKRALVSVS…KNHKFVSVIV (145 aa)) enclose the MGS-like domain.

Belongs to the PurH family.

The enzyme catalyses (6R)-10-formyltetrahydrofolate + 5-amino-1-(5-phospho-beta-D-ribosyl)imidazole-4-carboxamide = 5-formamido-1-(5-phospho-D-ribosyl)imidazole-4-carboxamide + (6S)-5,6,7,8-tetrahydrofolate. The catalysed reaction is IMP + H2O = 5-formamido-1-(5-phospho-D-ribosyl)imidazole-4-carboxamide. It participates in purine metabolism; IMP biosynthesis via de novo pathway; 5-formamido-1-(5-phospho-D-ribosyl)imidazole-4-carboxamide from 5-amino-1-(5-phospho-D-ribosyl)imidazole-4-carboxamide (10-formyl THF route): step 1/1. Its pathway is purine metabolism; IMP biosynthesis via de novo pathway; IMP from 5-formamido-1-(5-phospho-D-ribosyl)imidazole-4-carboxamide: step 1/1. The sequence is that of Bifunctional purine biosynthesis protein PurH from Bacillus thuringiensis (strain Al Hakam).